We begin with the raw amino-acid sequence, 291 residues long: Undecaprenyl-diphosphatase (291 aa).

8 helical membrane-spanning segments follow: residues 1–21 (MFII…LTEF), 48–68 (SAFT…AWVF), 102–122 (LHVL…DDFI), 126–146 (LFSV…MIIA), 162–182 (INYF…WPGF), 203–223 (SDFT…LSLL), 236–256 (FYIL…KTFL), and 267–287 (FAIY…GFGI).

It belongs to the UppP family.

Its subcellular location is the cell membrane. The enzyme catalyses di-trans,octa-cis-undecaprenyl diphosphate + H2O = di-trans,octa-cis-undecaprenyl phosphate + phosphate + H(+). Functionally, catalyzes the dephosphorylation of undecaprenyl diphosphate (UPP). Confers resistance to bacitracin. This chain is Undecaprenyl-diphosphatase, found in Staphylococcus aureus (strain MSSA476).